Here is a 73-residue protein sequence, read N- to C-terminus: MQIKHLITIFFLVLIVADHCHAFLGMIPGLIGGLISAFKGRRKREITSQIEQYRNLQKREAELENLLANLPVY.

Residues 1-22 (MQIKHLITIFFLVLIVADHCHA) form the signal peptide. Lysine amide is present on lysine 39. Positions 45–73 (EITSQIEQYRNLQKREAELENLLANLPVY) are excised as a propeptide.

The protein belongs to the non-disulfide-bridged peptide (NDBP) superfamily. Short antimicrobial peptide (group 4) family. In terms of tissue distribution, expressed by the venom gland.

The protein localises to the secreted. Antimicrobial peptide. Has a high antibacterial activity against the Gram-positive bacterium S.aureus (MIC=5-17.30 uM), the methicillin-resistant S.aureus (MRSA) (MIC=17.30 uM), and E.faecalis (MIC=69.23 uM). Has antifungal activity against Candida spp. and one Cryptococcus neoformans strains with MICs values ranging from 6.25 to 100 uM. Also shows an inhibitory activity on C.albicans biofilms at high concentrations. Has a moderate hemolytic potency (18% at 20 uM). Also inhibits the growth of the five human cancer cell lines tested (the squamous carcinoma cell line H157 (IC(50)=4.1 uM), the lung adenocarcinoma cell line H838 (11.0 uM), the breast carcinoma cell line MCF-7 (6.4 uM), the androgen-independent prostate adenocarcinoma cell line PC3 (13.3 uM) and the glioblastoma cell line U251-MG (15.4 uM)). In the model of polymicrobial sepsis, it exhibits an antibiotic effect, reducing the levels of microorganisms in the infectious focus and the inflammatory responses in the lung and cecum of septic animals. The polypeptide is Antimicrobial peptide TsAP-2 (Tityus serrulatus (Brazilian scorpion)).